Consider the following 911-residue polypeptide: General transcription factor 3C polypeptide 2 (911 aa).

2 disordered regions span residues 24-187 (DSPG…RRRA) and 205-297 (ALPA…MAPN). Positions 35-46 (DVKTSSEMTSAE) are enriched in polar residues. A Phosphoserine modification is found at Ser-63. The segment covering 64–81 (PDQRRLPPEQESLSRLEQ) has biased composition (basic and acidic residues). Over residues 92–112 (SKPRASKPGRKRGGRTRKGPK) the composition is skewed to basic residues. Positions 114–123 (PQQPNPPSAP) are enriched in pro residues. A phosphoserine mark is found at Ser-132, Ser-165, Ser-167, Ser-220, and Ser-260. Positions 253-262 (EAEDVEESEG) are enriched in acidic residues. A compositionally biased stretch (low complexity) spans 263–277 (PSESSSEPEPVVPRS). WD repeat units follow at residues 366-426 (PEDG…MNET), 427-483 (HPLS…AWEL), 484-535 (PGTP…IYKV), 536-603 (QCVA…SLKL), 604-654 (YPFQ…NSIK), and 655-690 (RFLSTELAWLLPYNGVTVAQDNCYASYGLCGIHYID). Residue Ser-597 is modified to Phosphoserine. The interval 765–785 (SPEGPDHSSASSGVPNPPKAR) is disordered. Residues Ser-871, Ser-892, and Ser-893 each carry the phosphoserine modification. A disordered region spans residues 889 to 911 (FQPSSPTRRPGFSPTSHRLLPTP). Thr-895 bears the Phosphothreonine mark. The residue at position 901 (Ser-901) is a Phosphoserine.

In terms of assembly, part of the TFIIIC subcomplex TFIIIC2, consisting of six subunits, GTF3C1, GTF3C2, GTF3C3, GTF3C4, GTF3C5 and GTF3C6.

Its subcellular location is the nucleus. Its function is as follows. Required for RNA polymerase III-mediated transcription. Component of TFIIIC that initiates transcription complex assembly on tRNA and is required for transcription of 5S rRNA and other stable nuclear and cytoplasmic RNAs. May play a direct role in stabilizing interactions of TFIIIC2 with TFIIIC1. The chain is General transcription factor 3C polypeptide 2 (GTF3C2) from Homo sapiens (Human).